A 446-amino-acid chain; its full sequence is Glutamyl-tRNA reductase 2 (446 aa).

Residues 53–56, serine 105, 110–112, and glutamine 116 contribute to the substrate site; these read TCNR and EQQ. The active-site Nucleophile is the cysteine 54. Residue 185-190 participates in NADP(+) binding; sequence GAGKMG. The interval 409-446 is disordered; it reads AAELFGIENETAGGERREGGAEGAAAAPGAGPVRSQGT. A compositionally biased stretch (low complexity) spans 431-440; that stretch reads GAAAAPGAGP.

It belongs to the glutamyl-tRNA reductase family. As to quaternary structure, homodimer.

The catalysed reaction is (S)-4-amino-5-oxopentanoate + tRNA(Glu) + NADP(+) = L-glutamyl-tRNA(Glu) + NADPH + H(+). Its pathway is porphyrin-containing compound metabolism; protoporphyrin-IX biosynthesis; 5-aminolevulinate from L-glutamyl-tRNA(Glu): step 1/2. Functionally, catalyzes the NADPH-dependent reduction of glutamyl-tRNA(Glu) to glutamate 1-semialdehyde (GSA). This chain is Glutamyl-tRNA reductase 2, found in Anaeromyxobacter dehalogenans (strain 2CP-C).